The chain runs to 383 residues: Large ribosomal subunit protein uL2m (383 aa).

2 disordered regions span residues 97-122 (FPKKGQSKGGRNHSGRVTVRHRGGGH) and 322-357 (MNANDHPHGGGRGKSKGNRHPVSPWGTPAKGGYKTR). Basic residues-rich tracts occupy residues 106–122 (GRNHSGRVTVRHRGGGH) and 330–340 (GGGRGKSKGNR).

The protein belongs to the universal ribosomal protein uL2 family. As to quaternary structure, component of the mitochondrial large ribosomal subunit (mt-LSU). Mature N.crassa 74S mitochondrial ribosomes consist of a small (37S) and a large (54S) subunit. The 37S small subunit contains a 16S ribosomal RNA (16S mt-rRNA) and 32 different proteins. The 54S large subunit contains a 23S rRNA (23S mt-rRNA) and 42 different proteins.

The protein resides in the mitochondrion. Component of the mitochondrial ribosome (mitoribosome), a dedicated translation machinery responsible for the synthesis of mitochondrial genome-encoded proteins, including at least some of the essential transmembrane subunits of the mitochondrial respiratory chain. The mitoribosomes are attached to the mitochondrial inner membrane and translation products are cotranslationally integrated into the membrane. This is Large ribosomal subunit protein uL2m (rml2) from Neurospora crassa (strain ATCC 24698 / 74-OR23-1A / CBS 708.71 / DSM 1257 / FGSC 987).